The following is a 201-amino-acid chain: Small ribosomal subunit protein uS4c (201 aa).

Positions L15 to Q43 are disordered. The 62-residue stretch at M89–N150 folds into the S4 RNA-binding domain.

This sequence belongs to the universal ribosomal protein uS4 family. Part of the 30S ribosomal subunit. Contacts protein S5. The interaction surface between S4 and S5 is involved in control of translational fidelity.

It localises to the plastid. The protein localises to the chloroplast. Functionally, one of the primary rRNA binding proteins, it binds directly to 16S rRNA where it nucleates assembly of the body of the 30S subunit. In terms of biological role, with S5 and S12 plays an important role in translational accuracy. This is Small ribosomal subunit protein uS4c (rps4) from Drimys granadensis.